A 955-amino-acid polypeptide reads, in one-letter code: Glutamyl aminopeptidase (955 aa).

The Cytoplasmic portion of the chain corresponds to 1-17; it reads MDIEDKTSKMHCMKGKH. A helical; Signal-anchor for type II membrane protein transmembrane segment spans residues 18-38; that stretch reads VVIICGVVIAVGLILGLGLGL. At 39 to 955 the chain is on the extracellular side; it reads GLDTKACNPP…LENSEHSNFA (917 aa). N-linked (GlcNAc...) asparagine glycosylation is found at Asn-118 and Asn-192. Position 218 (Glu-218) interacts with substrate. Asn-319 and Asn-335 each carry an N-linked (GlcNAc...) asparagine glycan. Residue 352–356 participates in substrate binding; the sequence is GAMEN. His-388 contacts Zn(2+). Glu-389 serves as the catalytic Proton acceptor. Zn(2+) contacts are provided by His-392 and Glu-411. Asn-458, Asn-547, Asn-584, Asn-592, Asn-674, Asn-759, Asn-823, and Asn-836 each carry an N-linked (GlcNAc...) asparagine glycan. Residue Arg-882 participates in substrate binding.

The protein belongs to the peptidase M1 family. As to quaternary structure, homodimer; disulfide-linked. Requires Zn(2+) as cofactor. Post-translationally, N-glycosylated. Glycosylation counts for an increased mass of about 32% of the protein mass (about 48 kDa).

It localises to the cell membrane. It catalyses the reaction Release of N-terminal glutamate (and to a lesser extent aspartate) from a peptide.. With respect to regulation, substrate specificity is modulated by calcium which enhances the enzymatic activity for cleavage of acidic residues while reducing its activity with neutral and basic residues. Hydrolytic activity is inhibited by the aminopeptidase inhibitor (Leu and acidic inhibitor) amastatin, but not by bestatin (aminopeptidase inhibitor Leu inhibitor), leupeptin, pepstatin A and PMSF. Its hydrolytic activity is also strongly reduced by zinc ions, with a complete inhibition at 0.5 mM, and moderately inhibited by cobalt and copper ions. In terms of biological role, venom protein that cleaves N-terminal acidic residues from peptides with high potency in presence of calcium. It may have several roles in venom including alteration of blood pressure by cleaving circulating angiotensin-2, general degradation of host tissue, increase of permeability to other venom components, and/or processing of other toxins in the venom. This Bitis rhinoceros (West African gaboon viper) protein is Glutamyl aminopeptidase.